The sequence spans 186 residues: Elongation factor P (186 aa).

This sequence belongs to the elongation factor P family.

The protein resides in the cytoplasm. The protein operates within protein biosynthesis; polypeptide chain elongation. Involved in peptide bond synthesis. Stimulates efficient translation and peptide-bond synthesis on native or reconstituted 70S ribosomes in vitro. Probably functions indirectly by altering the affinity of the ribosome for aminoacyl-tRNA, thus increasing their reactivity as acceptors for peptidyl transferase. The protein is Elongation factor P of Prochlorococcus marinus (strain MIT 9301).